The following is a 420-amino-acid chain: Argininosuccinate synthase (420 aa).

ATP contacts are provided by residues 9-17 and Ala35; that span reads AYSGGLDTS. Tyr86 and Ser91 together coordinate L-citrulline. ATP is bound at residue 114-122; it reads SHGCTGKGN. The L-aspartate site is built by Thr118, Asn122, and Asp123. Asn122 contacts L-citrulline. L-citrulline-binding residues include Arg126, Ser179, Ser188, Glu273, and Tyr285.

It belongs to the argininosuccinate synthase family. Type 1 subfamily. In terms of assembly, homotetramer.

The protein localises to the cytoplasm. The enzyme catalyses L-citrulline + L-aspartate + ATP = 2-(N(omega)-L-arginino)succinate + AMP + diphosphate + H(+). Its pathway is amino-acid biosynthesis; L-arginine biosynthesis; L-arginine from L-ornithine and carbamoyl phosphate: step 2/3. Catalyzes the eighth step in arginine biosynthesis. Also has a catabolic function as the first enzyme of citrulline utilization as nitrogen source via arginine and the reactions involved in the arginase pathway. The polypeptide is Argininosuccinate synthase (ARG1) (Saccharomyces cerevisiae (strain ATCC 204508 / S288c) (Baker's yeast)).